We begin with the raw amino-acid sequence, 391 residues long: Elongation factor Tu (391 aa).

The tr-type G domain occupies 10–201; that stretch reads KPHVNIGTIG…QVDAYIPTPV (192 aa). The G1 stretch occupies residues 19–26; the sequence is GHVDHGKT. GTP is bound at residue 19-26; that stretch reads GHVDHGKT. Mg(2+) is bound at residue Thr26. The interval 55–59 is G2; the sequence is GITIS. Positions 76 to 79 are G3; it reads DCPG. GTP contacts are provided by residues 76-80 and 131-134; these read DCPGH and NKVD. Positions 131 to 134 are G4; the sequence is NKVD. Residues 169–171 form a G5 region; the sequence is SAL.

It belongs to the TRAFAC class translation factor GTPase superfamily. Classic translation factor GTPase family. EF-Tu/EF-1A subfamily. In terms of assembly, monomer.

The protein localises to the cytoplasm. It catalyses the reaction GTP + H2O = GDP + phosphate + H(+). Its function is as follows. GTP hydrolase that promotes the GTP-dependent binding of aminoacyl-tRNA to the A-site of ribosomes during protein biosynthesis. In Mesorhizobium japonicum (strain LMG 29417 / CECT 9101 / MAFF 303099) (Mesorhizobium loti (strain MAFF 303099)), this protein is Elongation factor Tu.